The chain runs to 201 residues: Holliday junction resolvase RecU (201 aa).

T85, D87, E100, and Q119 together coordinate Mg(2+).

The protein belongs to the RecU family. Mg(2+) serves as cofactor.

The protein localises to the cytoplasm. The enzyme catalyses Endonucleolytic cleavage at a junction such as a reciprocal single-stranded crossover between two homologous DNA duplexes (Holliday junction).. In terms of biological role, endonuclease that resolves Holliday junction intermediates in genetic recombination. Cleaves mobile four-strand junctions by introducing symmetrical nicks in paired strands. Promotes annealing of linear ssDNA with homologous dsDNA. Required for DNA repair, homologous recombination and chromosome segregation. This chain is Holliday junction resolvase RecU, found in Geobacillus thermodenitrificans (strain NG80-2).